The sequence spans 345 residues: UPF0324 membrane protein HH_1161 (345 aa).

10 helical membrane-spanning segments follow: residues 7–29 (GFLY…SATL), 33–50 (LSPL…SPFY), 90–112 (LGLN…AIFI), 122–141 (ISLL…ILAL), 154–176 (VALG…IYYA), 186–208 (WGIF…AISP), 215–237 (IIVK…YIIF), 262–281 (LYIP…NSFI), 293–312 (FASK…QIDW), and 322–344 (TFAL…VYIM).

Belongs to the UPF0324 family.

The protein localises to the cell membrane. The chain is UPF0324 membrane protein HH_1161 from Helicobacter hepaticus (strain ATCC 51449 / 3B1).